The following is a 737-amino-acid chain: Zinc finger protein 585A (737 aa).

The KRAB domain occupies 1-65 (MAAPTREEWR…QGERPRQSCP (65 aa)). 6 C2H2-type zinc fingers span residues 126 to 148 (YVCI…QKTH), 154 to 176 (FKCN…QRIH), 182 to 204 (YECS…EKIH), 210 to 232 (HECT…QKIH), 238 to 260 (YICI…RRIH), and 266 to 288 (YECS…QRVH). The C2H2-type 7; degenerate zinc-finger motif lies at 294 to 316 (YICTEYGKVFSNNSNLITHKKVQ). 15 C2H2-type zinc fingers span residues 322–344 (SICT…QRIH), 350–372 (YACS…QRIH), 378–400 (YICM…QIIH), 406–428 (YKCG…KRIH), 434–456 (YMCN…QKTH), 462–484 (YICS…QRIH), 490–512 (YECS…QKIH), 518–540 (YECH…QKIH), 546–568 (YVCT…QRIH), 574–596 (YECS…QPLH), 602–624 (YVCA…QKTH), 630–652 (YICS…HRIH), 658–680 (YECS…QRIH), 686–708 (YVCA…QTTH), and 714–736 (YKCG…QSNH).

The protein belongs to the krueppel C2H2-type zinc-finger protein family.

It is found in the nucleus. May be involved in transcriptional regulation. The chain is Zinc finger protein 585A (ZNF585A) from Pongo abelii (Sumatran orangutan).